The sequence spans 294 residues: 4-hydroxy-tetrahydrodipicolinate synthase (294 aa).

Thr44 is a pyruvate binding site. Tyr132 (proton donor/acceptor) is an active-site residue. The active-site Schiff-base intermediate with substrate is the Lys160. Ile205 provides a ligand contact to pyruvate.

The protein belongs to the DapA family. In terms of assembly, homotetramer; dimer of dimers.

It localises to the cytoplasm. The enzyme catalyses L-aspartate 4-semialdehyde + pyruvate = (2S,4S)-4-hydroxy-2,3,4,5-tetrahydrodipicolinate + H2O + H(+). It functions in the pathway amino-acid biosynthesis; L-lysine biosynthesis via DAP pathway; (S)-tetrahydrodipicolinate from L-aspartate: step 3/4. Its function is as follows. Catalyzes the condensation of (S)-aspartate-beta-semialdehyde [(S)-ASA] and pyruvate to 4-hydroxy-tetrahydrodipicolinate (HTPA). The protein is 4-hydroxy-tetrahydrodipicolinate synthase of Kosmotoga olearia (strain ATCC BAA-1733 / DSM 21960 / TBF 19.5.1).